The sequence spans 194 residues: Leucyl/phenylalanyl-tRNA--protein transferase (194 aa).

Belongs to the L/F-transferase family.

The protein resides in the cytoplasm. The enzyme catalyses N-terminal L-lysyl-[protein] + L-leucyl-tRNA(Leu) = N-terminal L-leucyl-L-lysyl-[protein] + tRNA(Leu) + H(+). It carries out the reaction N-terminal L-arginyl-[protein] + L-leucyl-tRNA(Leu) = N-terminal L-leucyl-L-arginyl-[protein] + tRNA(Leu) + H(+). It catalyses the reaction L-phenylalanyl-tRNA(Phe) + an N-terminal L-alpha-aminoacyl-[protein] = an N-terminal L-phenylalanyl-L-alpha-aminoacyl-[protein] + tRNA(Phe). Functions in the N-end rule pathway of protein degradation where it conjugates Leu, Phe and, less efficiently, Met from aminoacyl-tRNAs to the N-termini of proteins containing an N-terminal arginine or lysine. The polypeptide is Leucyl/phenylalanyl-tRNA--protein transferase (Pelodictyon phaeoclathratiforme (strain DSM 5477 / BU-1)).